A 251-amino-acid polypeptide reads, in one-letter code: Imidazole glycerol phosphate synthase subunit HisF (251 aa).

Active-site residues include Asp-13 and Asp-132.

This sequence belongs to the HisA/HisF family. Heterodimer of HisH and HisF.

Its subcellular location is the cytoplasm. The catalysed reaction is 5-[(5-phospho-1-deoxy-D-ribulos-1-ylimino)methylamino]-1-(5-phospho-beta-D-ribosyl)imidazole-4-carboxamide + L-glutamine = D-erythro-1-(imidazol-4-yl)glycerol 3-phosphate + 5-amino-1-(5-phospho-beta-D-ribosyl)imidazole-4-carboxamide + L-glutamate + H(+). Its pathway is amino-acid biosynthesis; L-histidine biosynthesis; L-histidine from 5-phospho-alpha-D-ribose 1-diphosphate: step 5/9. IGPS catalyzes the conversion of PRFAR and glutamine to IGP, AICAR and glutamate. The HisF subunit catalyzes the cyclization activity that produces IGP and AICAR from PRFAR using the ammonia provided by the HisH subunit. In Campylobacter concisus (strain 13826), this protein is Imidazole glycerol phosphate synthase subunit HisF.